Reading from the N-terminus, the 306-residue chain is Agmatinase (306 aa).

Mn(2+)-binding residues include histidine 126, aspartate 149, histidine 151, aspartate 153, aspartate 230, and aspartate 232.

This sequence belongs to the arginase family. Agmatinase subfamily. It depends on Mn(2+) as a cofactor.

It carries out the reaction agmatine + H2O = urea + putrescine. Its pathway is amine and polyamine biosynthesis; putrescine biosynthesis via agmatine pathway; putrescine from agmatine: step 1/1. Functionally, catalyzes the formation of putrescine from agmatine. In Serratia proteamaculans (strain 568), this protein is Agmatinase.